A 428-amino-acid chain; its full sequence is C4-dicarboxylate transport protein (428 aa).

8 helical membrane passes run 8 to 28 (SLYFQVLTAIAIGILLGHFYP), 44 to 64 (LIKMIIAPVIFCTVVTGIAGM), 76 to 96 (VALLYFEIVSTIALIIGLIIV), 142 to 162 (IGAFASGNILQVLLFAVLFGF), 184 to 204 (VIFGIINMIMRLAPIGAFGAM), 222 to 242 (LIICFYITCILFVVLVLGSIA), 326 to 346 (IVHQITLLIVLLLSSKGAAGV), and 352 to 372 (IVLAATLSAVGHLPVAGLALI).

This sequence belongs to the dicarboxylate/amino acid:cation symporter (DAACS) (TC 2.A.23) family.

The protein resides in the cell inner membrane. Its function is as follows. Responsible for the transport of dicarboxylates such as succinate, fumarate, and malate from the periplasm across the membrane. The polypeptide is C4-dicarboxylate transport protein (Shigella dysenteriae serotype 1 (strain Sd197)).